Consider the following 236-residue polypeptide: Probable transcriptional activator protein TraR (236 aa).

The HTH luxR-type domain maps to 169–234 (VLNPKQMLSP…QLVAIAKDRG (66 aa)). The H-T-H motif DNA-binding region spans 193–212 (ASVTANLTGINARTVQHYLD).

It belongs to the autoinducer-regulated transcriptional regulatory protein family.

Functionally, positive regulation of conjugal transfer. TraR activates target genes in the presence of AAI and also activates traR and traI themselves. The protein is Probable transcriptional activator protein TraR (traR) of Sinorhizobium fredii (strain NBRC 101917 / NGR234).